A 177-amino-acid chain; its full sequence is Large ribosomal subunit protein uL6 (177 aa).

The protein belongs to the universal ribosomal protein uL6 family. Part of the 50S ribosomal subunit.

Functionally, this protein binds to the 23S rRNA, and is important in its secondary structure. It is located near the subunit interface in the base of the L7/L12 stalk, and near the tRNA binding site of the peptidyltransferase center. This is Large ribosomal subunit protein uL6 from Beijerinckia indica subsp. indica (strain ATCC 9039 / DSM 1715 / NCIMB 8712).